Consider the following 359-residue polypeptide: Phospho-N-acetylmuramoyl-pentapeptide-transferase (359 aa).

Helical transmembrane passes span isoleucine 27–tryptophan 47, threonine 73–leucine 93, threonine 94–valine 114, leucine 134–tyrosine 154, phenylalanine 166–serine 186, glycine 197–alanine 217, glycine 233–tryptophan 253, leucine 261–leucine 281, leucine 286–valine 306, and lysine 336–leucine 356.

Belongs to the glycosyltransferase 4 family. MraY subfamily. Mg(2+) is required as a cofactor.

Its subcellular location is the cell inner membrane. It carries out the reaction UDP-N-acetyl-alpha-D-muramoyl-L-alanyl-gamma-D-glutamyl-meso-2,6-diaminopimeloyl-D-alanyl-D-alanine + di-trans,octa-cis-undecaprenyl phosphate = di-trans,octa-cis-undecaprenyl diphospho-N-acetyl-alpha-D-muramoyl-L-alanyl-D-glutamyl-meso-2,6-diaminopimeloyl-D-alanyl-D-alanine + UMP. Its pathway is cell wall biogenesis; peptidoglycan biosynthesis. Catalyzes the initial step of the lipid cycle reactions in the biosynthesis of the cell wall peptidoglycan: transfers peptidoglycan precursor phospho-MurNAc-pentapeptide from UDP-MurNAc-pentapeptide onto the lipid carrier undecaprenyl phosphate, yielding undecaprenyl-pyrophosphoryl-MurNAc-pentapeptide, known as lipid I. The polypeptide is Phospho-N-acetylmuramoyl-pentapeptide-transferase (Maridesulfovibrio salexigens (strain ATCC 14822 / DSM 2638 / NCIMB 8403 / VKM B-1763) (Desulfovibrio salexigens)).